The sequence spans 2285 residues: Protein Ycf2 (2285 aa).

1638–1645 (GSIGTGRS) contributes to the ATP binding site.

It belongs to the Ycf2 family.

The protein resides in the plastid. Its subcellular location is the chloroplast stroma. In terms of biological role, probable ATPase of unknown function. Its presence in a non-photosynthetic plant (Epifagus virginiana) and experiments in tobacco indicate that it has an essential function which is probably not related to photosynthesis. This chain is Protein Ycf2, found in Populus trichocarpa (Western balsam poplar).